Consider the following 95-residue polypeptide: Large ribosomal subunit protein bL25 (95 aa).

It belongs to the bacterial ribosomal protein bL25 family. Part of the 50S ribosomal subunit; part of the 5S rRNA/L5/L18/L25 subcomplex. Contacts the 5S rRNA. Binds to the 5S rRNA independently of L5 and L18.

This is one of the proteins that binds to the 5S RNA in the ribosome where it forms part of the central protuberance. This Yersinia enterocolitica serotype O:8 / biotype 1B (strain NCTC 13174 / 8081) protein is Large ribosomal subunit protein bL25.